Consider the following 122-residue polypeptide: Large ribosomal subunit protein uL14 (122 aa).

Belongs to the universal ribosomal protein uL14 family. As to quaternary structure, part of the 50S ribosomal subunit. Forms a cluster with proteins L3 and L19. In the 70S ribosome, L14 and L19 interact and together make contacts with the 16S rRNA in bridges B5 and B8.

Binds to 23S rRNA. Forms part of two intersubunit bridges in the 70S ribosome. This chain is Large ribosomal subunit protein uL14, found in Shewanella halifaxensis (strain HAW-EB4).